We begin with the raw amino-acid sequence, 357 residues long: Chorismate synthase (357 aa).

Arg-48 is an NADP(+) binding site. Residues 125–127, 238–239, Gly-282, 297–301, and Arg-323 contribute to the FMN site; these read RSS, NA, and KPTSS.

The protein belongs to the chorismate synthase family. Homotetramer. Requires FMNH2 as cofactor.

The enzyme catalyses 5-O-(1-carboxyvinyl)-3-phosphoshikimate = chorismate + phosphate. The protein operates within metabolic intermediate biosynthesis; chorismate biosynthesis; chorismate from D-erythrose 4-phosphate and phosphoenolpyruvate: step 7/7. Catalyzes the anti-1,4-elimination of the C-3 phosphate and the C-6 proR hydrogen from 5-enolpyruvylshikimate-3-phosphate (EPSP) to yield chorismate, which is the branch point compound that serves as the starting substrate for the three terminal pathways of aromatic amino acid biosynthesis. This reaction introduces a second double bond into the aromatic ring system. The protein is Chorismate synthase of Gluconacetobacter diazotrophicus (strain ATCC 49037 / DSM 5601 / CCUG 37298 / CIP 103539 / LMG 7603 / PAl5).